The following is a 38-amino-acid chain: Photosystem II reaction center protein L (38 aa).

A helical transmembrane segment spans residues 17–37; the sequence is SLYWGLLLIFVLAVLFSSYIF.

Belongs to the PsbL family. In terms of assembly, PSII is composed of 1 copy each of membrane proteins PsbA, PsbB, PsbC, PsbD, PsbE, PsbF, PsbH, PsbI, PsbJ, PsbK, PsbL, PsbM, PsbT, PsbY, PsbZ, Psb30/Ycf12, at least 3 peripheral proteins of the oxygen-evolving complex and a large number of cofactors. It forms dimeric complexes.

The protein localises to the plastid. The protein resides in the chloroplast thylakoid membrane. Its function is as follows. One of the components of the core complex of photosystem II (PSII). PSII is a light-driven water:plastoquinone oxidoreductase that uses light energy to abstract electrons from H(2)O, generating O(2) and a proton gradient subsequently used for ATP formation. It consists of a core antenna complex that captures photons, and an electron transfer chain that converts photonic excitation into a charge separation. This subunit is found at the monomer-monomer interface and is required for correct PSII assembly and/or dimerization. This is Photosystem II reaction center protein L from Euglena gracilis.